We begin with the raw amino-acid sequence, 304 residues long: UDP-N-acetylenolpyruvoylglucosamine reductase (304 aa).

In terms of domain architecture, FAD-binding PCMH-type spans 33 to 198; the sequence is RVGGPADILV…IEATIELESG (166 aa). Arg-177 is an active-site residue. Ser-227 serves as the catalytic Proton donor. Glu-297 is an active-site residue.

Belongs to the MurB family. FAD serves as cofactor.

The protein localises to the cytoplasm. The catalysed reaction is UDP-N-acetyl-alpha-D-muramate + NADP(+) = UDP-N-acetyl-3-O-(1-carboxyvinyl)-alpha-D-glucosamine + NADPH + H(+). The protein operates within cell wall biogenesis; peptidoglycan biosynthesis. Functionally, cell wall formation. This chain is UDP-N-acetylenolpyruvoylglucosamine reductase, found in Clostridium perfringens (strain SM101 / Type A).